The primary structure comprises 1133 residues: Probable cation-transporting ATPase 9 (1133 aa).

Over 1-6 the chain is Cytoplasmic; that stretch reads MRVSSI. The chain crosses the membrane as a helical span at residues 7–28; sequence EAEMENPIDVDKTDVEGELKIK. Residues 29–34 are Extracellular-facing; that stretch reads QVTLLR. A helical transmembrane segment spans residues 35–53; sequence ENIVKKIVFFLVAIFCSDR. The Cytoplasmic segment spans residues 54 to 167; it reads PSVLKKVFYE…IEINVPSFLT (114 aa). A helical membrane pass occupies residues 168–190; it reads LMWREFKKPINFLLYFGIIVWGI. At 191-193 the chain is on the extracellular side; sequence EQM. Residues 194–212 traverse the membrane as a helical segment; sequence YVSTAITVVFTTTINSLIC. The Cytoplasmic segment spans residues 213 to 363; that stretch reads IYIRGVMQKL…PFNKKFQQQA (151 aa). A helical membrane pass occupies residues 364 to 383; sequence VKLTILMATLLLIGFLSTLS. Over 384–396 the chain is Extracellular; sequence RLLDIELPPLFIA. The chain crosses the membrane as a helical span at residues 397-418; sequence FRFLDILIYSAPPGMPMLIAIT. Topologically, residues 419-887 are cytoplasmic; that stretch reads NFVGLKRLKN…NSVEIFKGYL (469 aa). The active-site 4-aspartylphosphate intermediate is the Asp451. Mg(2+)-binding residues include Asp827 and Asp831. A helical membrane pass occupies residues 888–906; the sequence is QVALLRYLGFLTLAYFYSS. Residues 907–915 are Extracellular-facing; sequence YSSGQMDWQ. Residues 916–931 traverse the membrane as a helical segment; it reads ALASGYFLVYLILGCN. Over 932–948 the chain is Cytoplasmic; that stretch reads TPLKKLEKSVFDDNLFS. Residues 949–972 traverse the membrane as a helical segment; it reads IYNVTSVLFGFTLHILSIVGCVES. At 973-994 the chain is on the extracellular side; it reads LHASPIYKEVNSLDAENNFQFE. The helical transmembrane segment at 995 to 1018 threads the bilayer; that stretch reads TQHNTVLNFNILINFFYVIISNHI. Topologically, residues 1019 to 1030 are cytoplasmic; that stretch reads GKPMKDRYYKNT. The chain crosses the membrane as a helical span at residues 1031 to 1050; sequence IAIYYDLGLIYTCKCMILQV. The Extracellular portion of the chain corresponds to 1051–1101; sequence LLILEHTHHGLIFLILLLDQEFSSSLTVQVYFSLPMNLFLPEEFSLNFTQE. The helical transmembrane segment at 1102–1124 threads the bilayer; it reads VKKEKELLICNSSSTILEVDYNL. Residues 1125–1133 lie on the Cytoplasmic side of the membrane; the sequence is RLNYFQQNF.

Belongs to the cation transport ATPase (P-type) (TC 3.A.3) family. Type V subfamily.

The protein localises to the membrane. The catalysed reaction is ATP + H2O = ADP + phosphate + H(+). The polypeptide is Probable cation-transporting ATPase 9 (TPA9) (Tetrahymena thermophila).